Reading from the N-terminus, the 695-residue chain is Lupanine 17-hydroxylase [cytochrome c] (695 aa).

A signal peptide spans 1–26; that stretch reads MSANKNIWIIRLGVAFVCVAIGAAQA. The Cytochrome c domain maps to 598 to 677; that stretch reads AMAESGRHIF…ALQAFILQKA (80 aa). Residues C612, C615, and H616 each contribute to the heme c site.

The protein belongs to the bacterial PQQ dehydrogenase family. As to quaternary structure, monomer. The cofactor is pyrroloquinoline quinone. Heme c serves as cofactor.

Its subcellular location is the periplasm. The enzyme catalyses lupanine + 2 Fe(III)-[cytochrome c] + H2O = 17-hydroxylupanine + 2 Fe(II)-[cytochrome c] + 2 H(+). In terms of biological role, catalyzes the first reaction in the catabolism of the alkaloid lupanine. It dehydrogenates lupanine, which can then be hydrated to produce 17-hydroxylupanine. The protein is Lupanine 17-hydroxylase [cytochrome c] (luh) of Pseudomonas sp.